We begin with the raw amino-acid sequence, 890 residues long: MEKVKLTKNLKLKIKNAQLTKAAGLDKLKQKLAQAGSSEAKSSSEKPSAKEKSVKVALAATSTPTASAEQASPESTSRRIRAKNRSSFSSSEEESSAHIPVDTSEPAPVSIADPEPELEVVDEVCDESPEVHPVAEVLPEQPVLPETPPQEKELEPKPVKPAEPKSVVMIKSKFGPTGKHINHLLAKTFKAPAKEEKVVAGSKSTKPVASDKTGKPGTSEGGEQNNREKQFNPANRSPASGPKRDAGKKNLTDFRDRSKKSDESLKAFTGRDRYGLNEGGEEDRWRKKRVYKPKKHYDEASIQRPTHIKISLPITVKDLATEMKLKASEVIQKLFIHGMTYVVNDILDSETAVQFIGLEFGCTIDIDYSEQDKLCLSNDTVRDEIQSTDPSKLVIRSPIVAFMGHVDHGKTTLIDSLRKSNVAATEAGAITQHMGAFCCSTPVGDITILDTPGHEAFSAMRARGAEVCDIVVLVVAGDEGIKEQTLEAIEHAKAADIAIVVAINKCDKPNFNSETIYRQLSEINLLPEAWGGSTVTVNTSAKTGEGLSELLEMLALQAEVLELKADPSARARGLVIESELHKGLGPVATVLIQNGSLKLGEALVFNDCYGKVKTMHNEHNELMKEAGPSIPVLITGLSDIPKAGDPFFVVKNEKTARDIIEARSAGQQRFALQQKKRPNFDSMLQNKKTLKLMIKADVQGSIEALVSSISKIKSEKVDVEILTNSVGEISESDIRLAAASKAVLIGFHTGIESHAEPLIKSLGVRVELFTVIYHAIDAIKEIMTSLLDPIAEEKDEGSAEIKEIFRSSQVGSIYGCIVTEGIMTRNHKVRVLRNKEILWKGTLSSLKRVKEDVKEVRKGLECGILLEGYQQAQIGDVLQCYEVIYHPQKL.

2 disordered regions span residues 31-164 (KLAQ…PAEP) and 189-266 (FKAP…ESLK). Over residues 42–54 (SSSEKPSAKEKSV) the composition is skewed to basic and acidic residues. Residues 55-72 (KVALAATSTPTASAEQAS) show a composition bias toward low complexity. Over residues 114 to 128 (PEPELEVVDEVCDES) the composition is skewed to acidic residues. Composition is skewed to basic and acidic residues over residues 149–163 (PQEK…KPAE) and 242–266 (PKRD…ESLK). Positions 395 to 564 (IRSPIVAFMG…ALQAEVLELK (170 aa)) constitute a tr-type G domain. The interval 404–411 (GHVDHGKT) is G1. 404–411 (GHVDHGKT) lines the GTP pocket. A G2 region spans residues 429–433 (AITQH). The G3 stretch occupies residues 450–453 (DTPG). GTP contacts are provided by residues 450–454 (DTPGH) and 504–507 (NKCD). Residues 504-507 (NKCD) form a G4 region. The G5 stretch occupies residues 540–542 (SAK).

This sequence belongs to the TRAFAC class translation factor GTPase superfamily. Classic translation factor GTPase family. IF-2 subfamily.

It localises to the cytoplasm. One of the essential components for the initiation of protein synthesis. Protects formylmethionyl-tRNA from spontaneous hydrolysis and promotes its binding to the 30S ribosomal subunits. Also involved in the hydrolysis of GTP during the formation of the 70S ribosomal complex. This is Translation initiation factor IF-2 (infB) from Chlamydia pneumoniae (Chlamydophila pneumoniae).